A 62-amino-acid polypeptide reads, in one-letter code: Photosystem II reaction center protein Z (62 aa).

The next 2 helical transmembrane spans lie at 8-28 and 41-61; these read AVFA…VVFA and FSGT…NSLI.

It belongs to the PsbZ family. PSII is composed of 1 copy each of membrane proteins PsbA, PsbB, PsbC, PsbD, PsbE, PsbF, PsbH, PsbI, PsbJ, PsbK, PsbL, PsbM, PsbT, PsbY, PsbZ, Psb30/Ycf12, at least 3 peripheral proteins of the oxygen-evolving complex and a large number of cofactors. It forms dimeric complexes.

The protein localises to the plastid. The protein resides in the chloroplast thylakoid membrane. May control the interaction of photosystem II (PSII) cores with the light-harvesting antenna, regulates electron flow through the 2 photosystem reaction centers. PSII is a light-driven water plastoquinone oxidoreductase, using light energy to abstract electrons from H(2)O, generating a proton gradient subsequently used for ATP formation. This is Photosystem II reaction center protein Z from Lotus japonicus (Lotus corniculatus var. japonicus).